Consider the following 140-residue polypeptide: Large ribosomal subunit protein uL11 (140 aa).

The protein belongs to the universal ribosomal protein uL11 family. In terms of assembly, part of the ribosomal stalk of the 50S ribosomal subunit. Interacts with L10 and the large rRNA to form the base of the stalk. L10 forms an elongated spine to which L12 dimers bind in a sequential fashion forming a multimeric L10(L12)X complex. Post-translationally, one or more lysine residues are methylated.

In terms of biological role, forms part of the ribosomal stalk which helps the ribosome interact with GTP-bound translation factors. In Desulforapulum autotrophicum (strain ATCC 43914 / DSM 3382 / VKM B-1955 / HRM2) (Desulfobacterium autotrophicum), this protein is Large ribosomal subunit protein uL11.